The chain runs to 148 residues: UPF0134 protein MPN_410 (148 aa).

Belongs to the UPF0134 family.

This chain is UPF0134 protein MPN_410, found in Mycoplasma pneumoniae (strain ATCC 29342 / M129 / Subtype 1) (Mycoplasmoides pneumoniae).